Reading from the N-terminus, the 381-residue chain is tRNA pseudouridine synthase D (381 aa).

Asp-81 (nucleophile) is an active-site residue. The 176-residue stretch at 160 to 335 folds into the TRUD domain; that stretch reads GMPNYFGSQR…TLGSRRFFWV (176 aa).

It belongs to the pseudouridine synthase TruD family.

It carries out the reaction uridine(13) in tRNA = pseudouridine(13) in tRNA. Responsible for synthesis of pseudouridine from uracil-13 in transfer RNAs. This chain is tRNA pseudouridine synthase D, found in Helicobacter pylori (strain ATCC 700392 / 26695) (Campylobacter pylori).